Reading from the N-terminus, the 513-residue chain is Light-independent protochlorophyllide reductase subunit B (513 aa).

Asp-36 contacts [4Fe-4S] cluster. Catalysis depends on Asp-299, which acts as the Proton donor. Residue 434–435 (GM) participates in substrate binding.

This sequence belongs to the ChlB/BchB/BchZ family. In terms of assembly, protochlorophyllide reductase is composed of three subunits; ChlL, ChlN and ChlB. Forms a heterotetramer of two ChlB and two ChlN subunits. Requires [4Fe-4S] cluster as cofactor.

The protein resides in the plastid. The protein localises to the chloroplast. The catalysed reaction is chlorophyllide a + oxidized 2[4Fe-4S]-[ferredoxin] + 2 ADP + 2 phosphate = protochlorophyllide a + reduced 2[4Fe-4S]-[ferredoxin] + 2 ATP + 2 H2O. The protein operates within porphyrin-containing compound metabolism; chlorophyll biosynthesis (light-independent). Its function is as follows. Component of the dark-operative protochlorophyllide reductase (DPOR) that uses Mg-ATP and reduced ferredoxin to reduce ring D of protochlorophyllide (Pchlide) to form chlorophyllide a (Chlide). This reaction is light-independent. The NB-protein (ChlN-ChlB) is the catalytic component of the complex. The polypeptide is Light-independent protochlorophyllide reductase subunit B (Staurastrum punctulatum (Green alga)).